The sequence spans 339 residues: Ketol-acid reductoisomerase (NADP(+)) (339 aa).

Positions 1–182 (MRVYYDRDAD…GGGRAGIIET (182 aa)) constitute a KARI N-terminal Rossmann domain. Residues 24 to 27 (YGSQ), Arg-48, Ser-51, Ser-53, and 83 to 86 (DELQ) contribute to the NADP(+) site. The active site involves His-108. NADP(+) is bound at residue Gly-134. Residues 183 to 328 (TFKEECETDL…AKLRDMMPWI (146 aa)) enclose the KARI C-terminal knotted domain. Residues Asp-191, Glu-195, Glu-227, and Glu-231 each coordinate Mg(2+). Ser-252 serves as a coordination point for substrate.

The protein belongs to the ketol-acid reductoisomerase family. It depends on Mg(2+) as a cofactor.

It carries out the reaction (2R)-2,3-dihydroxy-3-methylbutanoate + NADP(+) = (2S)-2-acetolactate + NADPH + H(+). The enzyme catalyses (2R,3R)-2,3-dihydroxy-3-methylpentanoate + NADP(+) = (S)-2-ethyl-2-hydroxy-3-oxobutanoate + NADPH + H(+). Its pathway is amino-acid biosynthesis; L-isoleucine biosynthesis; L-isoleucine from 2-oxobutanoate: step 2/4. It functions in the pathway amino-acid biosynthesis; L-valine biosynthesis; L-valine from pyruvate: step 2/4. Functionally, involved in the biosynthesis of branched-chain amino acids (BCAA). Catalyzes an alkyl-migration followed by a ketol-acid reduction of (S)-2-acetolactate (S2AL) to yield (R)-2,3-dihydroxy-isovalerate. In the isomerase reaction, S2AL is rearranged via a Mg-dependent methyl migration to produce 3-hydroxy-3-methyl-2-ketobutyrate (HMKB). In the reductase reaction, this 2-ketoacid undergoes a metal-dependent reduction by NADPH to yield (R)-2,3-dihydroxy-isovalerate. The polypeptide is Ketol-acid reductoisomerase (NADP(+)) (Bradyrhizobium diazoefficiens (strain JCM 10833 / BCRC 13528 / IAM 13628 / NBRC 14792 / USDA 110)).